Here is a 303-residue protein sequence, read N- to C-terminus: Protease HtpX (303 aa).

A run of 2 helical transmembrane segments spans residues 4 to 24 (IGLF…VFGI) and 42 to 62 (IASL…ISLF). His-149 serves as a coordination point for Zn(2+). The active site involves Glu-150. Zn(2+) is bound at residue His-153. The next 2 helical transmembrane spans lie at 157–177 (GDMV…MFFA) and 200–220 (FVTS…IVMW). Zn(2+) is bound at residue Glu-226.

The protein belongs to the peptidase M48B family. Zn(2+) is required as a cofactor.

The protein resides in the cell inner membrane. In Psychrobacter sp. (strain PRwf-1), this protein is Protease HtpX.